Consider the following 334-residue polypeptide: Ephrin-B1 (334 aa).

A signal peptide spans 1-25 (MARPRGGRWLLGVLLALCRLAAPLA). The region spanning 26 to 160 (KSLEPVSWSA…TRSMKIVMKV (135 aa)) is the Ephrin RBD domain. The Extracellular portion of the chain corresponds to 26–231 (KSLEPVSWSA…FLSSKVAVFA (206 aa)). 2 cysteine pairs are disulfide-bonded: C60–C97 and C85–C149. N135 is a glycosylation site (N-linked (GlcNAc...) asparagine). The tract at residues 175–218 (SRPSKEADNTVKIVTQSPRHKVPTVEEPGKPGSVNQNGQETQGP) is disordered. The span at 207–218 (SVNQNGQETQGP) shows a compositional bias: polar residues. A helical membrane pass occupies residues 232–252 (AIGAGCVIFILIIIFLVVLLI). Residues 253 to 334 (KIRKRHRKHT…QSPANIYYKV (82 aa)) lie on the Cytoplasmic side of the membrane. The PDZ-binding motif lies at 332-334 (YKV).

Belongs to the ephrin family. As to quaternary structure, binds to the receptor tyrosine kinase EPHB2. Interacts with GRIP1 and GRIP2. In terms of processing, inducible phosphorylation of tyrosine residues in the cytoplasmic domain.

Its subcellular location is the membrane. Functionally, cell surface transmembrane ligand for Eph receptors, a family of receptor tyrosine kinases which are crucial for migration, repulsion and adhesion during neuronal, vascular and epithelial development. Binds promiscuously Eph receptors residing on adjacent cells, leading to contact-dependent bidirectional signaling into neighboring cells. The signaling pathway downstream of the receptor is referred to as forward signaling while the signaling pathway downstream of the ephrin ligand is referred to as reverse signaling. The chain is Ephrin-B1 (EFNB1) from Gallus gallus (Chicken).